The chain runs to 676 residues: RNA helicase NPH-II (676 aa).

The Helicase ATP-binding domain occupies 172-347 (FLAWISHRPV…IFLPNPAFIH (176 aa)). 185-192 (GGTGVGKT) provides a ligand contact to ATP. A DEXH box motif is present at residues 296-299 (DEVH). One can recognise a Helicase C-terminal domain in the interval 366–535 (NPSSRMAYIE…NYILYANKFN (170 aa)).

Belongs to the DEAD box helicase family. DEAH subfamily. Monomer.

The protein localises to the virion. It carries out the reaction ATP + H2O = ADP + phosphate + H(+). Its function is as follows. NTP-dependent helicase that catalyzes unidirectional unwinding of 3'tailed duplex RNAs and plays an important role during transcription of early mRNAs, presumably by preventing R-loop formation behind the elongating RNA polymerase. Might also play a role in the export of newly synthesized mRNA chains out of the core into the cytoplasm. Required for replication and propagation of viral particles. The polypeptide is RNA helicase NPH-II (OPG084) (Monkeypox virus).